The primary structure comprises 493 residues: Ketol-acid reductoisomerase (NADP(+)) (493 aa).

The 192-residue stretch at 17–208 folds into the KARI N-terminal Rossmann domain; it reads LGKCRFMKRE…GGDRAGVLES (192 aa). Residues 45–48, Arg68, Arg76, Ser78, and 108–110 contribute to the NADP(+) site; these read CGAQ and DKQ. His132 is a catalytic residue. Gly158 serves as a coordination point for NADP(+). 2 consecutive KARI C-terminal knotted domains span residues 209–353 and 354–486; these read SFIA…SEQE and YYDK…MTDM. Residues Asp217, Glu221, Glu389, and Glu393 each coordinate Mg(2+). A substrate-binding site is contributed by Ser414.

It belongs to the ketol-acid reductoisomerase family. The cofactor is Mg(2+).

It catalyses the reaction (2R)-2,3-dihydroxy-3-methylbutanoate + NADP(+) = (2S)-2-acetolactate + NADPH + H(+). It carries out the reaction (2R,3R)-2,3-dihydroxy-3-methylpentanoate + NADP(+) = (S)-2-ethyl-2-hydroxy-3-oxobutanoate + NADPH + H(+). It functions in the pathway amino-acid biosynthesis; L-isoleucine biosynthesis; L-isoleucine from 2-oxobutanoate: step 2/4. Its pathway is amino-acid biosynthesis; L-valine biosynthesis; L-valine from pyruvate: step 2/4. In terms of biological role, involved in the biosynthesis of branched-chain amino acids (BCAA). Catalyzes an alkyl-migration followed by a ketol-acid reduction of (S)-2-acetolactate (S2AL) to yield (R)-2,3-dihydroxy-isovalerate. In the isomerase reaction, S2AL is rearranged via a Mg-dependent methyl migration to produce 3-hydroxy-3-methyl-2-ketobutyrate (HMKB). In the reductase reaction, this 2-ketoacid undergoes a metal-dependent reduction by NADPH to yield (R)-2,3-dihydroxy-isovalerate. In Colwellia psychrerythraea (strain 34H / ATCC BAA-681) (Vibrio psychroerythus), this protein is Ketol-acid reductoisomerase (NADP(+)).